Here is a 335-residue protein sequence, read N- to C-terminus: Urokinase plasminogen activator surface receptor (335 aa).

The first 22 residues, 1-22, serve as a signal peptide directing secretion; the sequence is MGHPLLLPLLLLLHTCVPASWG. UPAR/Ly6 domains are found at residues 23 to 114, 115 to 213, and 214 to 305; these read LRCM…RSRY, LECI…PQNG, and HQCY…YRKG. Intrachain disulfides connect Cys-25–Cys-46, Cys-28–Cys-34, and Cys-39–Cys-67. Asn-74 carries N-linked (GlcNAc...) asparagine glycosylation. Cystine bridges form between Cys-93-Cys-98, Cys-117-Cys-144, Cys-120-Cys-127, Cys-137-Cys-169, Cys-175-Cys-192, Cys-193-Cys-198, Cys-216-Cys-244, Cys-219-Cys-227, Cys-237-Cys-263, Cys-269-Cys-287, and Cys-288-Cys-293. N-linked (GlcNAc...) asparagine glycans are attached at residues Asn-184, Asn-194, Asn-222, Asn-255, and Asn-284. The GPI-anchor amidated glycine moiety is linked to residue Gly-305. Positions 306–335 are cleaved as a propeptide — removed in mature form; that stretch reads AAPQPGPAHLSLTITLLMTARLWGGTLLWT.

As to quaternary structure, monomer. Interacts (via the UPAR/Ly6 domains) with SRPX2. Interacts with MRC2. Interacts with FAP (seprase); the interaction occurs at the cell surface of invadopodia membrane. Interacts with SORL1 (via N-terminal ectodomain); this interaction decreases PLAUR internalization. The ternary complex composed of PLAUR-PLAU-SERPINE1 also interacts with SORL1.

It is found in the cell membrane. Its subcellular location is the cell projection. The protein resides in the invadopodium membrane. In terms of biological role, acts as a receptor for urokinase plasminogen activator. Plays a role in localizing and promoting plasmin formation. Mediates the proteolysis-independent signal transduction activation effects of U-PA. It is subject to negative-feedback regulation by U-PA which cleaves it into an inactive form. This Macaca fascicularis (Crab-eating macaque) protein is Urokinase plasminogen activator surface receptor (PLAUR).